Consider the following 689-residue polypeptide: MANKEYPLAKFRNIGIMAHIDAGKTTATERILFYTGKTHKIGETHEGGATMDWMEQEQERGITITSAATTCFWKDHQVNIIDTPGHVDFTVEVERSLRVLDGAVTILDAKSGVEPQTETVWRQADNYKVPRMVFINKMDKLGADFLMSVGTLRERLHANAVPLQLPIGAEDSFSGIIDLVKNDAVIYKDDLGTVMDETEIPEDMKEIAEEYRTMLLEAVAEVDEDIMMKYLEGEEISVEEIKTALRHGVIANKIVPVLCGSAYKNKGVQLLLDAIVEFMPSPLDIEDVKGTEPTTGEEMTRPADAKAPLAALAFKIATDPFIGKLAFTRIYSGTMKSGTYVFNSNKGKRERIGRLVKMHANHREEVDELKAGELGAIVGLKDTTTGDTLCDDANPIILENMEFPEPVIDVSIEPKTKAGQEKMGIALAKLAEEDPTFRTYTNQETGQTIIAGMGELHLEIIVDRLIREFKVECNVGQPQVAYKETVRKHVKAEGKFVRQSGGRGQYGHCWIEMMPTEGEYEFDNAIVGGAIPKEYIPAIDNGIQEASQSGIIAGYPVINFKVKLVDGSYHDVDSSEMAFKIAGSMAFKNAMSKADAVLLEPSMKVEVVVPEEYMGDVIGDINSRRGRIEGMTPRAGAEVIRAFVPLSEMFGYATTLRSKTQGRGNYVMQFDHYEEVPKSIQDKVIGERK.

The region spanning Ala9–Leu283 is the tr-type G domain. Residues Ala18 to Thr25, Asp82 to His86, and Asn136 to Asp139 contribute to the GTP site.

This sequence belongs to the TRAFAC class translation factor GTPase superfamily. Classic translation factor GTPase family. EF-G/EF-2 subfamily.

The protein localises to the cytoplasm. Catalyzes the GTP-dependent ribosomal translocation step during translation elongation. During this step, the ribosome changes from the pre-translocational (PRE) to the post-translocational (POST) state as the newly formed A-site-bound peptidyl-tRNA and P-site-bound deacylated tRNA move to the P and E sites, respectively. Catalyzes the coordinated movement of the two tRNA molecules, the mRNA and conformational changes in the ribosome. The chain is Elongation factor G from Clostridium botulinum (strain Kyoto / Type A2).